Consider the following 220-residue polypeptide: Ribosomal RNA large subunit methyltransferase E (220 aa).

S-adenosyl-L-methionine contacts are provided by Gly-64, Trp-66, Asp-84, Asp-100, and Asp-125. Lys-165 functions as the Proton acceptor in the catalytic mechanism.

It belongs to the class I-like SAM-binding methyltransferase superfamily. RNA methyltransferase RlmE family.

The protein resides in the cytoplasm. It catalyses the reaction uridine(2552) in 23S rRNA + S-adenosyl-L-methionine = 2'-O-methyluridine(2552) in 23S rRNA + S-adenosyl-L-homocysteine + H(+). Its function is as follows. Specifically methylates the uridine in position 2552 of 23S rRNA at the 2'-O position of the ribose in the fully assembled 50S ribosomal subunit. This is Ribosomal RNA large subunit methyltransferase E from Thiobacillus denitrificans (strain ATCC 25259 / T1).